Reading from the N-terminus, the 307-residue chain is MTDLRGTLTENRPLADLTWLRVGGPADLFFQPADADDLAAFLRADLARPVFVMGVGSNLIVRDGGLRAAVIRLGRGFNGIRIDGTRVRAGAAALDAHVARKAAAAGVDLTFLRTIPGTIGGAVAMNAGCYGTYMADVFVEATALTRAGEAITLTREDLNFRYRQSDLPPGTVITEVVMEGPPGAPEALEARMADQLAKREATQPTKDRTAGSTFRNPAGFSSTGRADDTHEAKAWAVIDAAGMRGAMRGAAQMSPKHPNFLVNTGGATAAELESLGEEVRKKVFQATGHSLHWEVIRIGQPGRTPPA.

The region spanning 21–183 is the FAD-binding PCMH-type domain; that stretch reads RVGGPADLFF…TEVVMEGPPG (163 aa). Arg163 is a catalytic residue. A compositionally biased stretch (basic and acidic residues) spans 200 to 209; the sequence is EATQPTKDRT. The interval 200-227 is disordered; the sequence is EATQPTKDRTAGSTFRNPAGFSSTGRAD. The span at 210-224 shows a compositional bias: polar residues; the sequence is AGSTFRNPAGFSSTG. Ser212 (proton donor) is an active-site residue. Glu294 is a catalytic residue.

The protein belongs to the MurB family. FAD serves as cofactor.

It is found in the cytoplasm. The enzyme catalyses UDP-N-acetyl-alpha-D-muramate + NADP(+) = UDP-N-acetyl-3-O-(1-carboxyvinyl)-alpha-D-glucosamine + NADPH + H(+). Its pathway is cell wall biogenesis; peptidoglycan biosynthesis. Its function is as follows. Cell wall formation. The sequence is that of UDP-N-acetylenolpyruvoylglucosamine reductase from Dinoroseobacter shibae (strain DSM 16493 / NCIMB 14021 / DFL 12).